We begin with the raw amino-acid sequence, 336 residues long: F420-dependent glucose-6-phosphate dehydrogenase (336 aa).

Asp-39 is a coenzyme F420-(gamma-Glu)n binding site. His-40 functions as the Proton donor in the catalytic mechanism. Residues Thr-76 and Thr-107–Gly-108 each bind coenzyme F420-(gamma-Glu)n. Glu-109 functions as the Proton acceptor in the catalytic mechanism. Residues Asn-112, Gly-177–Gly-178, and Leu-180–Val-181 contribute to the coenzyme F420-(gamma-Glu)n site. Positions 195, 198, 259, and 283 each coordinate substrate.

Belongs to the F420-dependent glucose-6-phosphate dehydrogenase family. Homodimer.

It catalyses the reaction oxidized coenzyme F420-(gamma-L-Glu)(n) + D-glucose 6-phosphate + H(+) = 6-phospho-D-glucono-1,5-lactone + reduced coenzyme F420-(gamma-L-Glu)(n). Its function is as follows. Catalyzes the coenzyme F420-dependent oxidation of glucose 6-phosphate (G6P) to 6-phosphogluconolactone. The sequence is that of F420-dependent glucose-6-phosphate dehydrogenase from Nocardia farcinica (strain IFM 10152).